Reading from the N-terminus, the 251-residue chain is Triosephosphate isomerase (251 aa).

A substrate-binding site is contributed by 9 to 11; the sequence is NWK. Histidine 95 functions as the Electrophile in the catalytic mechanism. Glutamate 167 (proton acceptor) is an active-site residue. Residues glycine 173, serine 212, and 233–234 each bind substrate; that span reads GG.

This sequence belongs to the triosephosphate isomerase family. Homodimer.

The protein localises to the cytoplasm. The enzyme catalyses D-glyceraldehyde 3-phosphate = dihydroxyacetone phosphate. It functions in the pathway carbohydrate biosynthesis; gluconeogenesis. It participates in carbohydrate degradation; glycolysis; D-glyceraldehyde 3-phosphate from glycerone phosphate: step 1/1. Its function is as follows. Involved in the gluconeogenesis. Catalyzes stereospecifically the conversion of dihydroxyacetone phosphate (DHAP) to D-glyceraldehyde-3-phosphate (G3P). The polypeptide is Triosephosphate isomerase (Pseudomonas syringae pv. tomato (strain ATCC BAA-871 / DC3000)).